Consider the following 181-residue polypeptide: Transmembrane protein 47 (181 aa).

Ala2 is subject to N-acetylalanine. A run of 4 helical transmembrane segments spans residues Leu21–Pro41, Ala83–Ile103, Val115–Ile135, and Gly152–Leu172.

This sequence belongs to the TMEM47 family. Interacts with CTNNB1, CTNNA1, PRKCI, PARD6B, FYB1. As to expression, expressed in adult brain, fetal brain, cerebellum, heart, lung, prostate and thyroid.

The protein resides in the membrane. It is found in the cell junction. The protein localises to the adherens junction. Regulates cell junction organization in epithelial cells. May play a role in the transition from adherens junction to tight junction assembly. May regulate F-actin polymerization required for tight junctional localization dynamics and affect the junctional localization of PARD6B. During podocyte differentiation may negatively regulate activity of FYN and subsequently the abundance of nephrin. The sequence is that of Transmembrane protein 47 (TMEM47) from Homo sapiens (Human).